The following is a 218-amino-acid chain: LHFPL tetraspan subfamily member 3 protein (218 aa).

The next 4 membrane-spanning stretches (helical) occupy residues 22 to 42 (IGVL…VCFI), 96 to 116 (FFIG…GLFF), 126 to 146 (ICAW…MIFP), and 177 to 197 (ILAI…FVLG).

It belongs to the LHFP family.

It is found in the membrane. In Xenopus laevis (African clawed frog), this protein is LHFPL tetraspan subfamily member 3 protein.